The chain runs to 465 residues: Chaperone protein dnaJ C76, chloroplastic (465 aa).

The N-terminal 38 residues, 1–38 (MTPAIFSPTTLPPSTATWPCSTSQKLITVRSPLKFKCR), are a transit peptide targeting the chloroplast. Positions 50–113 (DLYDLLGIDR…ISRQAYDKEQ (64 aa)) constitute a J domain. Residues 346-385 (AALPSSGNNNGSKASSNPQVTRKTFPSEEKPTSRRENRRQ) are disordered. Over residues 350–362 (SSGNNNGSKASSN) the composition is skewed to low complexity. Basic and acidic residues predominate over residues 370 to 384 (FPSEEKPTSRRENRR).

The protein belongs to the DnaJ family. As to expression, expressed in roots, exclusively in the stele.

It is found in the plastid. Its subcellular location is the chloroplast. In terms of biological role, may function together with HSC70 chaperone to assist protein folding and prevent protein aggregation during salt stress in the chloroplast. Involved in root development. Required for the position-dependent cell fate determination during root hair development. This is Chaperone protein dnaJ C76, chloroplastic from Arabidopsis thaliana (Mouse-ear cress).